Reading from the N-terminus, the 577-residue chain is 9-cis-epoxycarotenoid dioxygenase NCED6, chloroplastic (577 aa).

Positions 1-25 are disordered; the sequence is MQHSLRSDLLPTKTSPRSHLLPQPK. H276, H325, H390, and H563 together coordinate Fe cation.

Belongs to the carotenoid oxygenase family. Requires Fe(2+) as cofactor. As to expression, expressed before fertilization in male and female gametophytes, and then immediately after pollination, restricted to seed endosperm.

It is found in the plastid. The protein resides in the chloroplast stroma. The catalysed reaction is a 9-cis-epoxycarotenoid + O2 = a 12'-apo-carotenal + 2-cis,4-trans-xanthoxin. It catalyses the reaction 9-cis-violaxanthin + O2 = (3S,5R,6S)-5,6-epoxy-3-hydroxy-5,6-dihydro-12'-apo-beta-caroten-12'-al + 2-cis,4-trans-xanthoxin. The enzyme catalyses 9'-cis-neoxanthin + O2 = (3S,5R,6R)-3,5-dihydroxy-6,7-didehydro-5,6-dihydro-12'-apo-beta-caroten-12'-al + 2-cis,4-trans-xanthoxin. In terms of biological role, has a 11,12(11',12') 9-cis epoxycarotenoid cleavage activity. Catalyzes the first step of abscisic-acid biosynthesis from carotenoids. Contributes probably to abscisic acid synthesis for the induction of seed dormancy. This is 9-cis-epoxycarotenoid dioxygenase NCED6, chloroplastic (NCED6) from Arabidopsis thaliana (Mouse-ear cress).